The primary structure comprises 576 residues: Sulfite reductase [NADPH] hemoprotein beta-component (576 aa).

The span at 1–12 (MNVKTEPDRSRD) shows a compositional bias: basic and acidic residues. The tract at residues 1–25 (MNVKTEPDRSRDVSQPLDKLGPDET) is disordered. [4Fe-4S] cluster is bound by residues Cys441, Cys447, Cys486, and Cys490. Siroheme is bound at residue Cys490.

It belongs to the nitrite and sulfite reductase 4Fe-4S domain family. As to quaternary structure, alpha(8)-beta(8). The alpha component is a flavoprotein, the beta component is a hemoprotein. Siroheme serves as cofactor. It depends on [4Fe-4S] cluster as a cofactor.

The enzyme catalyses hydrogen sulfide + 3 NADP(+) + 3 H2O = sulfite + 3 NADPH + 4 H(+). It functions in the pathway sulfur metabolism; hydrogen sulfide biosynthesis; hydrogen sulfide from sulfite (NADPH route): step 1/1. Component of the sulfite reductase complex that catalyzes the 6-electron reduction of sulfite to sulfide. This is one of several activities required for the biosynthesis of L-cysteine from sulfate. This chain is Sulfite reductase [NADPH] hemoprotein beta-component, found in Nitrobacter hamburgensis (strain DSM 10229 / NCIMB 13809 / X14).